The sequence spans 852 residues: Thrombospondin type-1 domain-containing protein 1 (852 aa).

A signal peptide spans 1–24 (MKPMLKDFSNLLLVVLCDYVLGEA). Residues 25 to 413 (EYLLLREPGH…QPQGPVKSNN (389 aa)) lie on the Extracellular side of the membrane. Residues Asn39, Asn53, Asn58, Asn69, Asn80, Asn135, and Asn304 are each glycosylated (N-linked (GlcNAc...) asparagine). One can recognise a TSP type-1 domain in the interval 340-393 (TETWGLWQPWSQCSATCGDGVRERRRVCLTSFPSSPVCPGMSLEASLCSLEECA). 3 disulfides stabilise this stretch: Cys352–Cys387, Cys356–Cys392, and Cys367–Cys377. The chain crosses the membrane as a helical span at residues 414 to 434 (IVTVTGISLCLFIIIATVLIT). Residues 435–852 (LWRRFGRPAK…STLSVEKLVI (418 aa)) are Cytoplasmic-facing. Disordered stretches follow at residues 444–517 (KCST…ESFQ) and 624–799 (LIRK…RKDK). Ser463 is modified (phosphoserine). Basic residues predominate over residues 645 to 654 (ARNAHFRRTA). Residues 655–669 (SFHEARQARPFRERS) show a composition bias toward basic and acidic residues. Positions 670–685 (MSTLTPRQAPAYSSRT) are enriched in polar residues. Residues 686–696 (RTCEQAEDRFR) are compositionally biased toward basic and acidic residues. Polar residues-rich tracts occupy residues 766–778 (SHKSVSRKQSSPI) and 785–794 (QRVSSLSPSQ).

As to quaternary structure, part of a complex composed of THSD1, PTK2/FAK1, TLN1 and VCL. Interacts with TLN1.

It localises to the endosome membrane. It is found in the cell junction. Its subcellular location is the focal adhesion. The protein localises to the membrane. The protein resides in the secreted. Is a positive regulator of nascent focal adhesion assembly, involved in the modulation of endothelial cell attachment to the extracellular matrix. This chain is Thrombospondin type-1 domain-containing protein 1 (THSD1), found in Homo sapiens (Human).